A 510-amino-acid chain; its full sequence is 2,3-bisphosphoglycerate-independent phosphoglycerate mutase (510 aa).

Residues Asp12 and Ser62 each contribute to the Mn(2+) site. Residue Ser62 is the Phosphoserine intermediate of the active site. Substrate-binding positions include His123, 153-154 (RD), Arg185, Arg191, 260-263 (RPDR), and Lys335. Mn(2+) is bound by residues Asp402, His406, Asp443, His444, and His461.

Belongs to the BPG-independent phosphoglycerate mutase family. As to quaternary structure, monomer. Mn(2+) serves as cofactor.

The enzyme catalyses (2R)-2-phosphoglycerate = (2R)-3-phosphoglycerate. It functions in the pathway carbohydrate degradation; glycolysis; pyruvate from D-glyceraldehyde 3-phosphate: step 3/5. Its function is as follows. Catalyzes the interconversion of 2-phosphoglycerate and 3-phosphoglycerate. This Listeria monocytogenes serotype 4b (strain F2365) protein is 2,3-bisphosphoglycerate-independent phosphoglycerate mutase.